Reading from the N-terminus, the 313-residue chain is Leucine zipper protein 4 (313 aa).

The interval 1 to 119 (MASFRKLTLS…PLIEQEKCSD (119 aa)) is interaction with DDX39B/UAP56. Disordered stretches follow at residues 1 to 238 (MASF…QGDL) and 290 to 313 (QSGR…TITT). Positions 22–40 (KVNFLDMSLDDIIIYKELE) match the UAP56-binding motif (UBM); required for proper nuclear localization motif. A compositionally biased stretch (basic and acidic residues) spans 34 to 60 (IIYKELEGTNAEEEKNKRQNHSKKESP). The tract at residues 51–80 (RQNHSKKESPSRQQSKAHRHRHRRGYSRCR) is arg-rich; required for RNA-binding. Residues 65-77 (SKAHRHRHRRGYS) are compositionally biased toward basic residues. The span at 81-92 (SNSEEGNHDKKP) shows a compositional bias: basic and acidic residues. Residues 126 to 141 (EKNQGQSEGNQHQSEG) show a composition bias toward polar residues. Basic and acidic residues predominate over residues 142 to 168 (NPDKSEESQGQPEENHHSERSRNHLER). Polar residues predominate over residues 169 to 179 (SLSQSDRSQGQ). Residues 178–236 (GQLKRHHPQYERSHGQYKRSHGQSERSHGHSERSHGHSERSHGHSERSHGHSKRSRSQG) form an RS-containing His-rich (RS-H); necessary for nuclear localization region. Over residues 199–226 (GQSERSHGHSERSHGHSERSHGHSERSH) the composition is skewed to basic and acidic residues. Serine 234 carries the post-translational modification Phosphoserine. Positions 238-287 (LVDTQSDLIATQRDLIATQKDLIATQRDLIATQRDLIVTQRDLVATERDL) are leucine-zipper; required for RNA-binding and for its relocalization to the cytoplasm during cell division. The tract at residues 241–313 (TQSDLIATQR…YSTGKNTITT (73 aa)) is interaction with NXF1. Residues 304–313 (YSTGKNTITT) are compositionally biased toward polar residues.

In terms of assembly, interacts with NXF1, NXF2, THOC1, THOC5, DDX39B/UAP56 and SRRT. Expressed specifically in testis. Also expressed in a wide variety of cancer types, but particularly high levels of expression observed in melanoma cells.

Its subcellular location is the nucleus. It localises to the cytoplasm. Export adapter involved in mRNA nuclear export in cancer cells. Binds and enhances the RNA-binding activity of the nuclear RNA export factor NXF1. Can restore mRNA export function in cells compromised by loss of mRNA export adapters. The chain is Leucine zipper protein 4 (LUZP4) from Homo sapiens (Human).